Consider the following 148-residue polypeptide: MALPKRIIKEIETLTRDPPPGIVAAPTEDNLRYFKITMEGPQQSAYEGGKFHLELFLPDEYPMMPPNVRFLTKIYHPNVDKLGRICLSTLKKDWSPALQIRTVLLSIQALMGAPNPDDPLDNDVAKIWKENEPQAIANAREWTKKYAV.

Residues 2–148 (ALPKRIIKEI…AREWTKKYAV (147 aa)) form the UBC core domain. Cys86 (glycyl thioester intermediate) is an active-site residue.

This sequence belongs to the ubiquitin-conjugating enzyme family. Heterodimer with spm2.

The catalysed reaction is S-ubiquitinyl-[E1 ubiquitin-activating enzyme]-L-cysteine + [E2 ubiquitin-conjugating enzyme]-L-cysteine = [E1 ubiquitin-activating enzyme]-L-cysteine + S-ubiquitinyl-[E2 ubiquitin-conjugating enzyme]-L-cysteine.. It participates in protein modification; protein ubiquitination. Its function is as follows. Has a role in the DNA error-free postreplication repair (PRR) pathway. The ubc13/spm2 heterodimer catalyzes the synthesis of non-canonical poly-ubiquitin chains that are linked through 'Lys-63'. This Schizosaccharomyces pombe (strain 972 / ATCC 24843) (Fission yeast) protein is Ubiquitin-conjugating enzyme E2 13 (ubc13).